The primary structure comprises 710 residues: MNYRGIYRRRYVFVLLLLVAVVNISYGWTVLKNKDYKRRYLSPSGVEKVRKHLSRKYVASRNNTQTFKKHYFSNTWAVHIDPPDNDVADRIAKKHGFTNIGKIGNIEGHYHFKHEEIGERELEKARHKTALLNLEDEVKFAEQQKILERVKRDGIPNDPYFKDMWYLLNTGQASGPAGVDMNVVPVWKKNITGRGIVISVLDDGLDWTHPDLEANYDQTASIVLNDNDNDPMPRDSDADNCHGTRCAGEAAAIANNGICGTGVAYNAKIGGVRMLDGQATDALEASALGFRGDHIDIYINCWGPKDDGKTFGKPGPMAAKALRLGAEQGRNRLGSIFVWATGNGGLTDDDCNCDGYTTSIFTISIGCIGDHGLSAYYTEKCSSTLAVTFNGASHKEGRENKMVTTDLYHQCTEEFKGTSASAPLAAGIIALTLEANPLLTWRDVQALIVHTAQITSPVDEGWKRNGAGFHFNHKFGFGRLDANAMVNAAQSWKNLPAQRKCTAASGFDHQDIPRGDSLFINIPTVACESSSAQIAKVEHVVLTVSFVHRRRGDVSIDLISPKDTKSQMLSPRKYDDSDEGLDEWSFMTVYNWGENPKGIWRLKITDNPNQDDVMNLFNGDNTDDVESLEERVIDTQTKQNKAEWEKMRKENPYFDVPYPNGVRKNKVTIEGSTQDHVKPKEGAKEPWGNYRNTNNINNNSSTAFKRKKKQ.

Residues 1-29 (MNYRGIYRRRYVFVLLLLVAVVNISYGWT) form the signal peptide. Asparagine 23, asparagine 62, and asparagine 190 each carry an N-linked (GlcNAc...) asparagine glycan. Residues 30–152 (VLKNKDYKRR…QQKILERVKR (123 aa)) constitute a propeptide that is removed on maturation. The Peptidase S8 domain occupies 164 to 486 (MWYLLNTGQA…FGRLDANAMV (323 aa)). Residues aspartate 202 and histidine 242 each act as charge relay system in the active site. 2 disulfide bridges follow: cysteine 259/cysteine 411 and cysteine 351/cysteine 381. Serine 419 serves as the catalytic Charge relay system. The P/Homo B domain occupies 495 to 638 (LPAQRKCTAA…EERVIDTQTK (144 aa)). The cysteines at positions 501 and 527 are disulfide-linked. Residues 668–710 (TIEGSTQDHVKPKEGAKEPWGNYRNTNNINNNSSTAFKRKKKQ) form a disordered region. Residues 673-684 (TQDHVKPKEGAK) show a composition bias toward basic and acidic residues. Residues 689–699 (NYRNTNNINNN) are compositionally biased toward low complexity. 2 N-linked (GlcNAc...) asparagine glycosylation sites follow: asparagine 698 and asparagine 699.

The protein belongs to the peptidase S8 family. Furin subfamily. Predominantly in the body column.

In terms of biological role, probably involved in the processing of hormone and other protein precursors at sites comprised of pairs of basic amino acid residues. The protein is PC3-like endoprotease variant B of Hydra vulgaris (Hydra).